The chain runs to 254 residues: MAVTDVFARRATLRRSLRLLADFRYEQRDPARFYRTLAADTAAMIGDLWLATHSEPPVGRTLLDVGGGPGYFATAFSDAGVGYIGVEPDPDEMHAAGPAFTGRPGMFVRASGMALPFADDSVDICLSSNVAEHVPRPWQLGTEMLRVTKPGGLVVLSYTVWLGPFGGHEMGLSHYLGGARAAARYVRKHGHPAKNNYGSSLFAVSAAEGLRWAAGTGAALAVFPRYHPRWAWWLTSVPVLREFLVSNLVLVLTP.

This sequence belongs to the methyltransferase superfamily.

This is an uncharacterized protein from Mycobacterium tuberculosis (strain ATCC 25177 / H37Ra).